Here is a 292-residue protein sequence, read N- to C-terminus: Small ribosomal subunit biogenesis GTPase RsgA (292 aa).

The region spanning 64-221 (RSELFRPAVA…LVDTPGFSSL (158 aa)) is the CP-type G domain. GTP is bound by residues 113-116 (NKMD) and 164-172 (GPSGVGKST). Zn(2+) contacts are provided by Cys-245, Cys-250, His-252, and Cys-258.

It belongs to the TRAFAC class YlqF/YawG GTPase family. RsgA subfamily. Monomer. Associates with 30S ribosomal subunit, binds 16S rRNA. It depends on Zn(2+) as a cofactor.

The protein resides in the cytoplasm. Functionally, one of several proteins that assist in the late maturation steps of the functional core of the 30S ribosomal subunit. Helps release RbfA from mature subunits. May play a role in the assembly of ribosomal proteins into the subunit. Circularly permuted GTPase that catalyzes slow GTP hydrolysis, GTPase activity is stimulated by the 30S ribosomal subunit. The polypeptide is Small ribosomal subunit biogenesis GTPase RsgA (Clostridium botulinum (strain Okra / Type B1)).